The sequence spans 474 residues: Eukaryotic translation initiation factor 3 subunit L (474 aa).

A PCI domain is found at 255–449 (DAIRMFSHIL…DLDYALQGDL (195 aa)).

The protein belongs to the eIF-3 subunit L family. Component of the eukaryotic translation initiation factor 3 (eIF-3) complex.

The protein localises to the cytoplasm. Functionally, component of the eukaryotic translation initiation factor 3 (eIF-3) complex, which is involved in protein synthesis of a specialized repertoire of mRNAs and, together with other initiation factors, stimulates binding of mRNA and methionyl-tRNAi to the 40S ribosome. The eIF-3 complex specifically targets and initiates translation of a subset of mRNAs involved in cell proliferation. In Neurospora crassa (strain ATCC 24698 / 74-OR23-1A / CBS 708.71 / DSM 1257 / FGSC 987), this protein is Eukaryotic translation initiation factor 3 subunit L.